Reading from the N-terminus, the 226-residue chain is UPF0758 protein PSEEN5431 (226 aa).

Positions 102–224 constitute an MPN domain; that stretch reads VMDNPLAVRR…PLSMIEHGWL (123 aa). His-173, His-175, and Asp-186 together coordinate Zn(2+). A JAMM motif motif is present at residues 173–186; it reads HNHPSGNCEPSQDD.

Belongs to the UPF0758 family.

The chain is UPF0758 protein PSEEN5431 from Pseudomonas entomophila (strain L48).